We begin with the raw amino-acid sequence, 300 residues long: ESX-5 secretion-associated protein EspG5 (300 aa).

The protein belongs to the EspG family. Interacts specifically with ESX-5-dependent PE/PPE proteins. Forms a 1:1:1 heterotrimeric complex with the PE25/PPE41 dimer, via PPE41. Binding of EspG5 does not cause conformational changes in the PE25/PPE41 dimer. Forms a 1:1:1 heterotrimeric complex with the PE8/PPE15 dimer, via PPE15.

Its subcellular location is the cytoplasm. In terms of biological role, specific chaperone for cognate PE/PPE proteins. Plays an important role in preventing aggregation of PE/PPE dimers. The protein is ESX-5 secretion-associated protein EspG5 of Mycobacterium tuberculosis (strain ATCC 25618 / H37Rv).